Reading from the N-terminus, the 889-residue chain is Disease resistance protein UNI (889 aa).

The stretch at 19-64 (NCLIGKSYIRTLEKNLRALQREMEDLRAIQHEVQNKVARDEARHQR) forms a coiled coil. The disordered stretch occupies residues 131-152 (GNFDEVSQPPPRSEVEERPTQP). The NB-ARC domain occupies 137–440 (SQPPPRSEVE…CEGFIGEDQV (304 aa)). 179-186 (GMGGVGKT) contacts ATP. LRR repeat units lie at residues 510-532 (WGAV…ESKC), 533-555 (SELT…FIRY), 557-580 (QKLV…ISGL), 581-603 (VSLQ…LKEL), 604-625 (KKLT…GISR), 626-652 (LLSL…LQQL), 653-676 (QNLQ…LAKL), 698-721 (MENL…ESET), and 825-848 (CPKL…EIHM).

The protein belongs to the disease resistance NB-LRR family. In terms of assembly, interacts with RPT2A.

Its function is as follows. Involved in disease resistance via the salicylic acid (SA) signaling pathway. Involved in shoot architecture development via the cytokinin signaling pathway. This chain is Disease resistance protein UNI, found in Arabidopsis thaliana (Mouse-ear cress).